The chain runs to 168 residues: Protein GrpE (168 aa).

It belongs to the GrpE family. As to quaternary structure, homodimer.

It is found in the cytoplasm. Its function is as follows. Participates actively in the response to hyperosmotic and heat shock by preventing the aggregation of stress-denatured proteins, in association with DnaK and GrpE. It is the nucleotide exchange factor for DnaK and may function as a thermosensor. Unfolded proteins bind initially to DnaJ; upon interaction with the DnaJ-bound protein, DnaK hydrolyzes its bound ATP, resulting in the formation of a stable complex. GrpE releases ADP from DnaK; ATP binding to DnaK triggers the release of the substrate protein, thus completing the reaction cycle. Several rounds of ATP-dependent interactions between DnaJ, DnaK and GrpE are required for fully efficient folding. The polypeptide is Protein GrpE (Thermotoga neapolitana (strain ATCC 49049 / DSM 4359 / NBRC 107923 / NS-E)).